A 296-amino-acid polypeptide reads, in one-letter code: uncharacterized protein (296 aa).

It to Synechocystis PCC 6803 sll0787 and M.jannaschii MJ0640.

This is an uncharacterized protein from Methanocaldococcus jannaschii (strain ATCC 43067 / DSM 2661 / JAL-1 / JCM 10045 / NBRC 100440) (Methanococcus jannaschii).